The sequence spans 46 residues: Probable butyrate kinase (46 aa).

The protein belongs to the acetokinase family.

It is found in the cytoplasm. It carries out the reaction butanoate + ATP = butanoyl phosphate + ADP. This Geobacillus stearothermophilus (Bacillus stearothermophilus) protein is Probable butyrate kinase (buk).